We begin with the raw amino-acid sequence, 145 residues long: D-aminoacyl-tRNA deacylase (145 aa).

Positions 137–138 (GP) match the Gly-cisPro motif, important for rejection of L-amino acids motif.

This sequence belongs to the DTD family. As to quaternary structure, homodimer.

The protein localises to the cytoplasm. The enzyme catalyses glycyl-tRNA(Ala) + H2O = tRNA(Ala) + glycine + H(+). The catalysed reaction is a D-aminoacyl-tRNA + H2O = a tRNA + a D-alpha-amino acid + H(+). An aminoacyl-tRNA editing enzyme that deacylates mischarged D-aminoacyl-tRNAs. Also deacylates mischarged glycyl-tRNA(Ala), protecting cells against glycine mischarging by AlaRS. Acts via tRNA-based rather than protein-based catalysis; rejects L-amino acids rather than detecting D-amino acids in the active site. By recycling D-aminoacyl-tRNA to D-amino acids and free tRNA molecules, this enzyme counteracts the toxicity associated with the formation of D-aminoacyl-tRNA entities in vivo and helps enforce protein L-homochirality. The polypeptide is D-aminoacyl-tRNA deacylase (Pseudoalteromonas atlantica (strain T6c / ATCC BAA-1087)).